The chain runs to 25 residues: Omega-conotoxin CVIB (25 aa).

Intrachain disulfides connect Cys1–Cys16, Cys8–Cys20, and Cys15–Cys25. Cys25 carries the post-translational modification Cysteine amide.

This sequence belongs to the conotoxin O1 superfamily. As to expression, expressed by the venom duct.

Its subcellular location is the secreted. In terms of biological role, omega-conotoxins act at presynaptic membranes, they bind and block voltage-gated calcium channels (Cav). This toxin blocks N-, P- and Q-type calcium channels. It shows high activities on Cav2.1/CACNA1A (IC(50)=11 nM) and Cav2.2/CACNA1B (IC(50)=7.7 nM). In addition, it shows a higher potency when Cav2.2/CACNA1B is only expressed with the ancillary subunit CACNB3 (IC(50)=1.6 nM) than on Cav2.2/CACNA1B expressed with the ancillary subunits CACNA2D1 and CACNB3 (IC(50)=12 nM). Both the Cav2.2/CACNA1B block by this toxin and the recovery are voltage-independent. It is noteworthy that ancillary subunits beta do not modulate recovery from this toxin block, since Cav2.2/CACNA1B expressed with either the ancillary subunit CACNB2a (isoform 2a) or with CACNB3 exhibits moderate recovery. In Conus catus (Cat cone), this protein is Omega-conotoxin CVIB.